The sequence spans 369 residues: MTLEEKEEVSTSTSQSPQSSSFENVFCAICGDRATGKHYGAMSCDGCKGFFRRTIRKRHSYVCRFGEKCQVDKAKRNSCRKCRFDVCLRKGMRRDAVQTERDRIRPANPLSNGSNGGIVPDDPLLDTLIRAEASTRGLRTTVITKTAEARKQATTNDVTDSMNQQLTLMVEWAKVLEGFQRVDNITQVALLRHFSAQHLVMCAAFRSIHLSDAVWLTNETCLHKDSPKIPDMNRVAERIIDQVTNPMRSLHMNEIEYIALKAIAFFDPLAKGITSESYSDVEEMRQRILESFERHVRYVSPYKDMPLRFANLLLLLPPMLAISRDLVEDVQLAKLFGLASIDNLMLELMLPNEGKNTTDKTSPPIMCHQ.

The segment at residues 67–142 is a DNA-binding region (nuclear receptor); sequence EKCQVDKAKR…ASTRGLRTTV (76 aa). 2 NR C4-type zinc fingers span residues 70–90 and 106–130; these read QVDK…CLRK and PANP…TLIR. The 233-residue stretch at 120–352 folds into the NR LBD domain; sequence PDDPLLDTLI…NLMLELMLPN (233 aa).

This sequence belongs to the nuclear hormone receptor family.

The protein localises to the nucleus. In terms of biological role, orphan nuclear receptor. In Caenorhabditis elegans, this protein is Nuclear hormone receptor family member nhr-64 (nhr-64).